Consider the following 1056-residue polypeptide: Contactin-5 (1056 aa).

A compositionally biased stretch (low complexity) spans 1–14 (MKADSSSSSSMSSR). Residues 1–33 (MKADSSSSSSMSSRMRLRNSHGVGSSSQDWSPF) are disordered. Over residues 22 to 31 (GVGSSSQDWS) the composition is skewed to polar residues. Ig-like C2-type domains lie at 57 to 142 (PVFI…IVLS), 154 to 240 (PFSG…RVLS), 258 to 343 (PKIE…GHLQ), 348 to 432 (PQWI…AELK), 438 to 519 (PMFN…AELT), and 527 to 622 (PMRV…AELL). Intrachain disulfides connect C81–C131, C175–C227, and C280–C327. N96 and N119 each carry an N-linked (GlcNAc...) asparagine glycan. N355 is a glycosylation site (N-linked (GlcNAc...) asparagine). 3 disulfides stabilise this stretch: C369–C416, C459–C507, and C549–C606. 2 N-linked (GlcNAc...) asparagine glycosylation sites follow: N489 and N496. Fibronectin type-III domains follow at residues 629–727 (PPGV…TKEA), 732–829 (APAN…SAEG), 834–928 (PPSE…TKKN), and 933–1023 (PPGN…TSSG). The interval 711 to 736 (GTGDPSPPSRAVRTKEAVPSVAPANV) is disordered. N-linked (GlcNAc...) asparagine glycans are attached at residues N772, N887, N945, and N958. The GPI-anchor amidated asparagine moiety is linked to residue N1035. The propeptide at 1036 to 1056 (SPPGLAWTALFLSLMVPSFPL) is removed in mature form.

It belongs to the immunoglobulin superfamily. Contactin family.

It localises to the cell membrane. Functionally, contactins mediate cell surface interactions during nervous system development. The polypeptide is Contactin-5 (cntn5) (Danio rerio (Zebrafish)).